The following is a 525-amino-acid chain: Nucleolar and spindle-associated protein 1-C (525 aa).

Disordered regions lie at residues 43-203, 250-293, 373-398, and 452-525; these read FYPE…KKLH, TPVS…FSAA, TPESEPKQMLPSVKKNEPMTTPEKAK, and LSRP…VPVQ. The segment covering 58–69 has biased composition (polar residues); it reads SSLTDTDELNSS. The span at 82 to 92 shows a compositional bias: basic residues; sequence THRRGRGRKPL. Basic and acidic residues predominate over residues 93–102; it reads KNHDTPKDEF. Residues 113–127 are compositionally biased toward polar residues; the sequence is SLASETDNTQHQNCL. Positions 160–169 are enriched in basic and acidic residues; sequence TTEKRQKKAS. Residues 270–285 show a composition bias toward polar residues; that stretch reads PPTTGASPSRTPTNQR. Over residues 476–494 the composition is skewed to polar residues; that stretch reads CGSNNNVSVLKNNFKQPHL. Over residues 495 to 514 the composition is skewed to basic and acidic residues; that stretch reads QTREDRRKQHEQDRKGKRDQ.

The protein belongs to the NUSAP family. Interacts with DNA, microtubules, ipo7, kpna2 and kpnb1. Microtubule stabilization is inhibited by ipo7 and kpna2, while microtubule bundling is inhibited by kpnb1. Active GTP-bound ran causes dissociation of ipo7 and kpnb1.

The protein localises to the cytoplasm. It localises to the nucleus. Its subcellular location is the cytoskeleton. The protein resides in the spindle. Functionally, microtubule-associated protein with the capacity to bundle and stabilize microtubules. May associate with chromosomes and promote the organization of meiotic or mitotic spindle microtubules around them. The protein is Nucleolar and spindle-associated protein 1-C (nusap1-c) of Xenopus laevis (African clawed frog).